A 486-amino-acid chain; its full sequence is Heme A synthase COX15 (486 aa).

A mitochondrion-targeting transit peptide spans 1-33 (MLFRNIEVGRQAAKLLTRTSSRLAWQSIGASRN). The Mitochondrial matrix portion of the chain corresponds to 34–85 (ISTIRQQIRKTQLYNFKKTVSIRPFSLSSPVFKPHVASESNPIESRLKTSKN). Residues 86 to 106 (VAYWLIGTSGLVFGIVVLGGL) traverse the membrane as a helical segment. Residues 107–170 (TRLTESGLSI…FIFFMEWIHR (64 aa)) are Mitochondrial intermembrane-facing. Histidine 169 provides a ligand contact to heme o. Residues 171–191 (LWGRAIGAVFILPAVYFAVSK) traverse the membrane as a helical segment. Topologically, residues 192–200 (KTSGHVNKR) are mitochondrial matrix. Residues 201-221 (LFGLAGLLGLQGFVGWWMVKS) form a helical membrane-spanning segment. At 222-243 (GLDQEQLDARKSKPTVSQYRLT) the chain is on the mitochondrial intermembrane side. The chain crosses the membrane as a helical span at residues 244 to 264 (THLGTAFFLYMGMLWTGLEIL). Residue histidine 245 coordinates heme o. The Mitochondrial matrix portion of the chain corresponds to 265 to 293 (RECKWIKNPVQAISLFKKLDNPAIGPMRK). The helical transmembrane segment at 294 to 314 (ISLALLAVSFLTAMSGGMVAG) threads the bilayer. At 315–364 (LDAGWVYNTWPKMGERWFPSSRELMDENFCRREDKKDLWWRNLLENPVTV) the chain is on the mitochondrial intermembrane side. Residues 365–387 (QLVHRTCAYVAFTSVLAAHMYAI) form a helical membrane-spanning segment. Position 368 (histidine 368) interacts with heme b. At 388 to 402 (KKKAVIPRNAMTSLH) the chain is on the mitochondrial matrix side. Residues 403–423 (VMMGVVTLQATLGILTILYLV) form a helical membrane-spanning segment. A topological domain (mitochondrial intermembrane) is located at residue proline 424. A helical transmembrane segment spans residues 425-445 (ISLASIHQAGALALLTSSLVF). Heme b is bound at residue histidine 431. Over 446-486 (ASQLRKPRAPMRNVIITLPHSSKVTSGKILSEASKLASKPL) the chain is Mitochondrial matrix.

This sequence belongs to the COX15/CtaA family. Type 2 subfamily. In terms of assembly, forms 200-350 kDa oligomeric complexes independent on heme binding. In addition to form homooligomeric complexes, a portion also associates with the mitochondrial respiratory supercomplexes. Interacts with CcO assembly factors PET117, SHY1, COA3 and COA1, CcO subunit COX13 and cytochrome b-c1 subunit COR1. Heme b serves as cofactor.

It localises to the mitochondrion inner membrane. It catalyses the reaction Fe(II)-heme o + 2 A + H2O = Fe(II)-heme a + 2 AH2. It functions in the pathway porphyrin-containing compound metabolism; heme A biosynthesis; heme A from heme O: step 1/1. In terms of biological role, catalyzes the second reaction in the biosynthesis of heme A, a prosthetic group of mitochondrial cytochrome c oxidase (CcO). Heme A is synthesized from heme B by two sequential enzymatic reactions catalyzed by heme O synthase (HOS/COX10) and heme A synthase (HAS/COX15). HAS catalyzes the conversion of heme O to heme A by two successive hydroxylations of the methyl group at C8, in a reaction that involves matrix ferredoxin YAH1 and ferredoxin reductase ARH1. The first hydroxylation forms heme I, the second hydroxylation results in an unstable dihydroxymethyl group, which spontaneously dehydrates, resulting in the formyl group of heme A. May also play a secondary role in CcO assembly. Plays a role in the maturation of COX1, the heme A-containing structural CcO subunit, possibly by interacting with the COX1-containing sub-assembly complexes that form prior to heme A insertion. May also positively regulate the upstream enzymatic reaction, farnesylation of heme B by HOS/COX10. The protein is Heme A synthase COX15 of Saccharomyces cerevisiae (strain ATCC 204508 / S288c) (Baker's yeast).